A 359-amino-acid chain; its full sequence is Squamosa promoter-binding-like protein 13A (359 aa).

Positions 75-94 are disordered; it reads AKPEGSRSSSSKRTRGNGVG. The SBP-type zinc-finger motif lies at 98–175; sequence MPICLVDGCD…DGHNRRRRKP (78 aa). 8 residues coordinate Zn(2+): cysteine 101, cysteine 106, cysteine 123, histidine 126, cysteine 142, cysteine 145, histidine 149, and cysteine 161. The short motif at 158-174 is the Bipartite nuclear localization signal element; that stretch reads KRSCRKRLDGHNRRRRK.

It depends on Zn(2+) as a cofactor.

Its subcellular location is the nucleus. Trans-acting factor that binds specifically to the consensus nucleotide sequence 5'-TNCGTACAA-3'. The chain is Squamosa promoter-binding-like protein 13A (SPL13A) from Arabidopsis thaliana (Mouse-ear cress).